We begin with the raw amino-acid sequence, 227 residues long: 3,4-dihydroxy-2-butanone 4-phosphate synthase (227 aa).

Residues 45–46 (RE), Asp50, 158–162 (RRGHT), and Glu182 each bind D-ribulose 5-phosphate. Position 46 (Glu46) interacts with Mg(2+). Position 161 (His161) interacts with Mg(2+).

It belongs to the DHBP synthase family. Homodimer. It depends on Mg(2+) as a cofactor. Requires Mn(2+) as cofactor.

It carries out the reaction D-ribulose 5-phosphate = (2S)-2-hydroxy-3-oxobutyl phosphate + formate + H(+). It participates in cofactor biosynthesis; riboflavin biosynthesis; 2-hydroxy-3-oxobutyl phosphate from D-ribulose 5-phosphate: step 1/1. In terms of biological role, catalyzes the conversion of D-ribulose 5-phosphate to formate and 3,4-dihydroxy-2-butanone 4-phosphate. In Ralstonia nicotianae (strain ATCC BAA-1114 / GMI1000) (Ralstonia solanacearum), this protein is 3,4-dihydroxy-2-butanone 4-phosphate synthase.